The following is a 159-amino-acid chain: MAEQTEKAFLKQPKVFLSSKKSGKGKRPGKGGNRFWKNIGLGFKTPREAIEGTYIDQKCPFTGTVSIRGRILSGTCHSAKMQRTIIVRRDYLHFVKKYRRYEKRHSNIPAHVSPCFRVKEGDRVTIGQCRPLSKTVRFNVLKVIPAGSSSIGKKAFTGM.

Belongs to the universal ribosomal protein uS17 family.

It localises to the cytoplasm. In Arabidopsis thaliana (Mouse-ear cress), this protein is Small ribosomal subunit protein uS17y (RPS11B).